Consider the following 309-residue polypeptide: Ribonuclease Z (309 aa).

Positions 63, 65, 67, 68, 145, 216, and 274 each coordinate Zn(2+). D67 functions as the Proton acceptor in the catalytic mechanism.

It belongs to the RNase Z family. Homodimer. The cofactor is Zn(2+).

The enzyme catalyses Endonucleolytic cleavage of RNA, removing extra 3' nucleotides from tRNA precursor, generating 3' termini of tRNAs. A 3'-hydroxy group is left at the tRNA terminus and a 5'-phosphoryl group is left at the trailer molecule.. Functionally, zinc phosphodiesterase, which displays some tRNA 3'-processing endonuclease activity. Probably involved in tRNA maturation, by removing a 3'-trailer from precursor tRNA. The protein is Ribonuclease Z of Streptococcus sanguinis (strain SK36).